The primary structure comprises 366 residues: ERCC4 domain-containing protein EP364R (366 aa).

Positions 3–101 (FLVADHREHH…QLYFFVEGPA (99 aa)) constitute an ERCC4 domain. 2 stretches are compositionally biased toward polar residues: residues 320–331 (RPTMQVATQPAA) and 349–366 (PTGHQTLSKEMSLNTVRC). Positions 320–366 (RPTMQVATQPAATQPLHKVSDDASSDASSPTGHQTLSKEMSLNTVRC) are disordered.

This sequence belongs to the asfivirus EP364R family.

Its function is as follows. Plays a role in the inhibition of type I interferon signaling pathway. Mechanistically, specifically interacts with 2',3'-cGAMP and cleaves it via its phosphodiesterase activity. In turn, prevents 2',3'-cGAMP interaction with host ER-resident STING1 leading to inhibition of downstream signaling pathway and type I interferon production. The sequence is that of ERCC4 domain-containing protein EP364R from Ornithodoros (relapsing fever ticks).